The sequence spans 92 residues: Small ribosomal subunit protein uS19 (92 aa).

Belongs to the universal ribosomal protein uS19 family.

In terms of biological role, protein S19 forms a complex with S13 that binds strongly to the 16S ribosomal RNA. The polypeptide is Small ribosomal subunit protein uS19 (Francisella tularensis subsp. tularensis (strain FSC 198)).